We begin with the raw amino-acid sequence, 149 residues long: MADKFNILLLNGPNLNMLGVREPEKYGTLTLAQIAARLDRRAQALGVSLHHIQSNAEHELIAQIHAAFGNTDFILVNPAAFTHTSVALRDALLAVQIPFIEIHLSNVHAREPFRHHSYLSDIAVGVICGLGAEGYEYALQAAVNRLNKS.

Y26 (proton acceptor) is an active-site residue. Residues N77, H83, and D90 each contribute to the substrate site. The Proton donor role is filled by H103. Substrate-binding positions include 104–105 (LS) and R114.

It belongs to the type-II 3-dehydroquinase family. Homododecamer.

It carries out the reaction 3-dehydroquinate = 3-dehydroshikimate + H2O. Its pathway is metabolic intermediate biosynthesis; chorismate biosynthesis; chorismate from D-erythrose 4-phosphate and phosphoenolpyruvate: step 3/7. Its function is as follows. Catalyzes a trans-dehydration via an enolate intermediate. The polypeptide is 3-dehydroquinate dehydratase (Edwardsiella ictaluri (strain 93-146)).